Here is a 187-residue protein sequence, read N- to C-terminus: Lipoprotein signal peptidase (187 aa).

Transmembrane regions (helical) follow at residues 12-32 (VAVF…TKMW), 68-88 (MTWL…VLAV), and 91-111 (ISMK…GNLI). Catalysis depends on residues aspartate 127 and aspartate 140. A helical transmembrane segment spans residues 141–161 (IFLMLAGVAAVLLLFLGEPFS). A disordered region spans residues 167 to 187 (EANGKTLGDDANATDDGAKAA).

Belongs to the peptidase A8 family.

The protein localises to the cell membrane. The enzyme catalyses Release of signal peptides from bacterial membrane prolipoproteins. Hydrolyzes -Xaa-Yaa-Zaa-|-(S,diacylglyceryl)Cys-, in which Xaa is hydrophobic (preferably Leu), and Yaa (Ala or Ser) and Zaa (Gly or Ala) have small, neutral side chains.. It participates in protein modification; lipoprotein biosynthesis (signal peptide cleavage). Its function is as follows. This protein specifically catalyzes the removal of signal peptides from prolipoproteins. The sequence is that of Lipoprotein signal peptidase from Bifidobacterium adolescentis (strain ATCC 15703 / DSM 20083 / NCTC 11814 / E194a).